A 350-amino-acid chain; its full sequence is Melatonin receptor type 1A (350 aa).

Topologically, residues 1 to 29 are extracellular; sequence MQGNGSALPNASQPVLRGDGARPSWLASA. Asparagine 4 and asparagine 10 each carry an N-linked (GlcNAc...) asparagine glycan. A helical membrane pass occupies residues 30 to 50; sequence LACVLIFTIVVDILGNLLVIL. At 51–63 the chain is on the cytoplasmic side; sequence SVYRNKKLRNAGN. Residues 64-84 traverse the membrane as a helical segment; sequence IFVVSLAVADLVVAIYPYPLV. At 85 to 102 the chain is on the extracellular side; it reads LMSIFNNGWNLGYLHCQV. A disulfide bridge connects residues cysteine 100 and cysteine 177. The chain crosses the membrane as a helical span at residues 103–123; the sequence is SGFLMGLSVIGSIFNITGIAI. Residues 124–142 lie on the Cytoplasmic side of the membrane; sequence NRYCYICHSLKYDKLYSSK. A helical transmembrane segment spans residues 143 to 163; sequence NSLCYVLLIWLLTLAAVLPNL. The melatonin site is built by asparagine 162 and glutamine 181. Residues 164-187 lie on the Extracellular side of the membrane; that stretch reads RAGTLQYDPRIYSCTFAQSVSSAY. Residues 188–208 form a helical membrane-spanning segment; that stretch reads TIAVVVFHFLVPMIIVIFCYL. The Cytoplasmic segment spans residues 209 to 240; it reads RIWILVLQVRQRVKPDRKPKLKPQDFRNFVTM. The helical transmembrane segment at 241 to 261 threads the bilayer; that stretch reads FVVFVLFAICWAPLNFIGLAV. The Extracellular portion of the chain corresponds to 262–274; that stretch reads ASDPASMVPRIPE. A helical transmembrane segment spans residues 275-295; the sequence is WLFVASYYMAYFNSCLNAIIY. Residues 296-350 lie on the Cytoplasmic side of the membrane; sequence GLLNQNFRKEYRRIIVSLCTARVFFVDSSNDVADRVKWKPSPLMTNNNVVKVDSV.

The protein belongs to the G-protein coupled receptor 1 family. In terms of tissue distribution, expressed in hypophyseal pars tuberalis and hypothalamic suprachiasmatic nuclei (SCN). Hippocampus.

Its subcellular location is the cell membrane. High affinity receptor for melatonin. Likely to mediate the reproductive and circadian actions of melatonin. The activity of this receptor is mediated by pertussis toxin sensitive G proteins that inhibit adenylate cyclase activity. Possibly involved in sleep induction, by melatonin activation of the potassium channel KCNMA1/BK and the dissociation of G-beta and G-gamma subunits, thereby decreasing synaptic transmission. The polypeptide is Melatonin receptor type 1A (MTNR1A) (Homo sapiens (Human)).